The chain runs to 327 residues: Aldo-keto reductase family 7 member A3 (327 aa).

Ser-2 is subject to Phosphoserine. Residues Met-13, Arg-18, and Asp-40 each coordinate NADP(+). The active-site Proton donor is Tyr-45. His-109 is a binding site for citrate. Asn-140, Asn-194, Leu-196, Gly-198, Arg-204, and Arg-218 together coordinate NADP(+). Citrate contacts are provided by Tyr-228 and Arg-231. Residues Ser-286, Gln-290, Gln-293, Asn-294, and Arg-327 each coordinate NADP(+).

Belongs to the aldo/keto reductase family. Aldo/keto reductase 2 subfamily. As to quaternary structure, homodimer. Heterodimer with AKR7A2.

The protein resides in the cytoplasm. It carries out the reaction a primary alcohol + NADP(+) = an aldehyde + NADPH + H(+). The enzyme catalyses aflatoxin B1 dialdehyde + NADPH + H(+) = aflatoxin B1 C(6a)-monoaldehyde + NADP(+). It catalyses the reaction aflatoxin B1 dialdehyde + NADPH + H(+) = aflatoxin B1 C(8)-monoaldehyde + NADP(+). The catalysed reaction is aflatoxin B1 C(6a)-monoaldehyde + NADPH + 2 H(+) = aflatoxin B1 triol + NADP(+). Its activity is regulated as follows. Inhibited by citrate. In terms of biological role, catalyzes the NADPH-dependent reduction of various carbonyl-containing compounds, including aldehydes, ketones, and toxic products from cellular metabolism or environmental exposure. Can reduce the dialdehyde form of aflatoxin B1 (AFB1) into alcohol derivatives, via monoaldehydes intermediates, thus preventing the formation of protein adducts that contribute to AFB1-induced toxicity. This is Aldo-keto reductase family 7 member A3 from Rattus norvegicus (Rat).